We begin with the raw amino-acid sequence, 396 residues long: Phosphoglycerate kinase (396 aa).

Substrate is bound by residues 21-23, Arg-36, 59-62, Arg-119, and Arg-156; these read DFN and HLGK. Residues Lys-206, Glu-325, and 352 to 355 contribute to the ATP site; that span reads GGDS.

Belongs to the phosphoglycerate kinase family. Monomer.

The protein resides in the cytoplasm. The enzyme catalyses (2R)-3-phosphoglycerate + ATP = (2R)-3-phospho-glyceroyl phosphate + ADP. The protein operates within carbohydrate degradation; glycolysis; pyruvate from D-glyceraldehyde 3-phosphate: step 2/5. The polypeptide is Phosphoglycerate kinase (Staphylococcus carnosus (strain TM300)).